The primary structure comprises 210 residues: Na(+)-translocating NADH-quinone reductase subunit D (210 aa).

Helical transmembrane passes span 14-34 (PIVS…ALAV), 42-62 (LVMT…ISML), 72-92 (IIVQ…VLQA), 103-123 (VFVG…AYAM), 131-151 (FMDG…VGFV), and 178-198 (NGLL…IWII).

It belongs to the NqrDE/RnfAE family. As to quaternary structure, composed of six subunits; NqrA, NqrB, NqrC, NqrD, NqrE and NqrF.

The protein localises to the cell inner membrane. It carries out the reaction a ubiquinone + n Na(+)(in) + NADH + H(+) = a ubiquinol + n Na(+)(out) + NAD(+). Its function is as follows. NQR complex catalyzes the reduction of ubiquinone-1 to ubiquinol by two successive reactions, coupled with the transport of Na(+) ions from the cytoplasm to the periplasm. NqrA to NqrE are probably involved in the second step, the conversion of ubisemiquinone to ubiquinol. This chain is Na(+)-translocating NADH-quinone reductase subunit D, found in Shewanella woodyi (strain ATCC 51908 / MS32).